The primary structure comprises 126 residues: Adenosine 5'-monophosphoramidase HINT1 (126 aa).

A2 carries the N-acetylalanine modification. In terms of domain architecture, HIT spans I18–G126. 2 positions are modified to N6-acetyllysine: K21 and K30. D43–I44 contacts AMP. 2 positions are modified to phosphoserine: S45 and S72. AMP-binding positions include N99, G105–S107, and H112–H114. Positions H110 to H114 match the Histidine triad motif motif. The Tele-AMP-histidine intermediate role is filled by H112.

The protein belongs to the HINT family. In terms of assembly, homodimer. Interacts with CDK7. Interacts with RUVBL1 and RUVBL2 and is associated with the LEF1/TCF1-CTNNB1 complex and with a KAT5 histone acetyltransferase complex. Identified in a complex with MITF and CTNNB1. Interacts with CDC34 and RBX1, and is part of a SCF (SKP2-CUL1-F-box protein) E3 ubiquitin-protein ligase complex. Interacts with SUMO1, SUMO2 and RGS17. Interacts with the Ten-1 ICD form of TENM1. Interacts with CALM1; interaction increases in the presence of calcium ions.

The protein resides in the cytoplasm. It is found in the nucleus. It catalyses the reaction adenosine 5'-phosphoramidate + H2O = AMP + NH4(+). In terms of biological role, exhibits adenosine 5'-monophosphoramidase activity, hydrolyzing purine nucleotide phosphoramidates with a single phosphate group such as adenosine 5'monophosphoramidate (AMP-NH2) to yield AMP and NH2. Hydrolyzes adenosine 5'monophosphomorpholidate (AMP-morpholidate) and guanosine 5'monophosphomorpholidate (GMP-morpholidate). Hydrolyzes lysyl-AMP (AMP-N-epsilon-(N-alpha-acetyl lysine methyl ester)) generated by lysine tRNA ligase, as well as Met-AMP, His-AMP and Asp-AMP, lysyl-GMP (GMP-N-epsilon-(N-alpha-acetyl lysine methyl ester)) and AMP-N-alanine methyl ester. Can also convert adenosine 5'-O-phosphorothioate and guanosine 5'-O-phosphorothioate to the corresponding nucleoside 5'-O-phosphates with concomitant release of hydrogen sulfide. In addition, functions as a scaffolding protein that modulates transcriptional activation by the LEF1/TCF1-CTNNB1 complex and by the complex formed with MITF and CTNNB1. Modulates p53/TP53 levels and p53/TP53-mediated apoptosis. Modulates proteasomal degradation of target proteins by the SCF (SKP2-CUL1-F-box protein) E3 ubiquitin-protein ligase complex. Also exhibits SUMO-specific isopeptidase activity, deconjugating SUMO1 from RANGAP1 and RGS17. This chain is Adenosine 5'-monophosphoramidase HINT1 (HINT1), found in Pongo abelii (Sumatran orangutan).